The sequence spans 372 residues: MLVWLFSWLGHYYAPFYAVSSLTLRALLAVVTALAFSMVFGNRVIRRLRALKYGQAIRNDGPQSHLVKTGTPTMGGVLILSAIGVSTLLWARLNNPYVWILLIVMIIFGAVGWADDWLKIKYKNPKGLIARKKYFWLSMGALFVGISLYYIATLQPDIATTREMQDLLIPIFKDWMIPFSAVPFGIGFIIFTYFVINGASNAVNLTDGLDGLAILPVVLVAAGLGAMAYVSGDVRFADYLHVPYIAYNSEVIIVCGAMIGAGLGFLWFNAHPAQVFMGDVGALSLGAMLGTIAVMTRQEIAFAIMGGLFVAEALSVMLQVGSYKLRKKRVFRMAPLHHHFEEIGWKETQVVARFWIIAIILVILGLMTLKLR.

The next 10 membrane-spanning stretches (helical) occupy residues 2-22 (LVWLFSWLGHYYAPFYAVSSL), 71-91 (TPTMGGVLILSAIGVSTLLWA), 98-118 (VWILLIVMIIFGAVGWADDWL), 134-154 (YFWLSMGALFVGISLYYIATL), 176-196 (MIPFSAVPFGIGFIIFTYFVI), 211-231 (GLAILPVVLVAAGLGAMAYVS), 251-271 (VIIVCGAMIGAGLGFLWFNAH), 275-295 (VFMGDVGALSLGAMLGTIAVM), 300-320 (IAFAIMGGLFVAEALSVMLQV), and 349-369 (QVVARFWIIAIILVILGLMTL).

It belongs to the glycosyltransferase 4 family. MraY subfamily. It depends on Mg(2+) as a cofactor.

The protein localises to the cell inner membrane. It carries out the reaction UDP-N-acetyl-alpha-D-muramoyl-L-alanyl-gamma-D-glutamyl-meso-2,6-diaminopimeloyl-D-alanyl-D-alanine + di-trans,octa-cis-undecaprenyl phosphate = di-trans,octa-cis-undecaprenyl diphospho-N-acetyl-alpha-D-muramoyl-L-alanyl-D-glutamyl-meso-2,6-diaminopimeloyl-D-alanyl-D-alanine + UMP. It functions in the pathway cell wall biogenesis; peptidoglycan biosynthesis. Catalyzes the initial step of the lipid cycle reactions in the biosynthesis of the cell wall peptidoglycan: transfers peptidoglycan precursor phospho-MurNAc-pentapeptide from UDP-MurNAc-pentapeptide onto the lipid carrier undecaprenyl phosphate, yielding undecaprenyl-pyrophosphoryl-MurNAc-pentapeptide, known as lipid I. This Psychrobacter cryohalolentis (strain ATCC BAA-1226 / DSM 17306 / VKM B-2378 / K5) protein is Phospho-N-acetylmuramoyl-pentapeptide-transferase.